We begin with the raw amino-acid sequence, 483 residues long: Serine protease HTRA4 (483 aa).

The signal sequence occupies residues 1-30; that stretch reads MSFQRLWAVRTQFLLLWLLLPAVPVPWAEA. The IGFBP N-terminal domain occupies 35 to 113; it reads VSLPCPDACD…GAWLGTCGCA (79 aa). 6 disulfides stabilise this stretch: Cys-39–Cys-65, Cys-43–Cys-67, Cys-48–Cys-68, Cys-54–Cys-71, Cys-79–Cys-93, and Cys-87–Cys-110. The segment at 208–368 is serine protease; the sequence is GSGFIVSEDG…IPSDRIRQFL (161 aa). Active-site charge relay system residues include His-224, Asp-254, and Ser-332. The 93-residue stretch at 379–471 folds into the PDZ domain; it reads KAPLQKKYLG…LSIIVLRGSQ (93 aa).

The protein belongs to the peptidase S1C family.

Its subcellular location is the secreted. Its function is as follows. Serine protease. This Mus musculus (Mouse) protein is Serine protease HTRA4 (Htra4).